A 72-amino-acid chain; its full sequence is MAQHSKYSDAQLSAIVNDMIAVLEKHKAPVDLSLIALGNMASNLLTTSVPQTQREALAQAFSNSLINAVKTR.

Belongs to the UPF0352 family.

The chain is UPF0352 protein NTHI1007 from Haemophilus influenzae (strain 86-028NP).